A 169-amino-acid chain; its full sequence is Cytochrome c-type biogenesis protein CcmE (169 aa).

The Cytoplasmic portion of the chain corresponds to 1 to 7 (MTRKQRR). Residues 8 to 28 (MTIIGGSLAVLALAAALVLNA) traverse the membrane as a helical; Signal-anchor for type II membrane protein segment. Over 29-169 (LRDSIVFFST…AQGNPQGAVR (141 aa)) the chain is Periplasmic. Histidine 122 and tyrosine 126 together coordinate heme. Residues 143-169 (DDYGGKASDGVKPAATTAQGNPQGAVR) form a disordered region. The segment covering 158–169 (TTAQGNPQGAVR) has biased composition (polar residues).

Belongs to the CcmE/CycJ family.

It is found in the cell inner membrane. Functionally, heme chaperone required for the biogenesis of c-type cytochromes. Transiently binds heme delivered by CcmC and transfers the heme to apo-cytochromes in a process facilitated by CcmF and CcmH. This is Cytochrome c-type biogenesis protein CcmE from Bradyrhizobium diazoefficiens (strain JCM 10833 / BCRC 13528 / IAM 13628 / NBRC 14792 / USDA 110).